We begin with the raw amino-acid sequence, 242 residues long: Small ribosomal subunit protein uS3 (242 aa).

In terms of domain architecture, KH type-2 spans 39-109 (IRQYVEKNLA…QIRINVIEVA (71 aa)). Positions 220-242 (VPAQAPRRQQRRRQQFEDRSSEG) are disordered. The span at 233–242 (QQFEDRSSEG) shows a compositional bias: basic and acidic residues.

Belongs to the universal ribosomal protein uS3 family. As to quaternary structure, part of the 30S ribosomal subunit. Forms a tight complex with proteins S10 and S14.

In terms of biological role, binds the lower part of the 30S subunit head. Binds mRNA in the 70S ribosome, positioning it for translation. The polypeptide is Small ribosomal subunit protein uS3 (Microcystis aeruginosa (strain NIES-843 / IAM M-2473)).